The sequence spans 581 residues: MNDKDLSTWQTFCRLWPIVSPFRIGLIVAAVALILNAAGDTLMLSLLKPLLDEGFGKASSDVLKWMPLIVIALMIMRGLSGFVSSYCISWVSGKVVMQMRRRLFSHMMGMPVSFFDQQSTGTLLSRITYDSEQVASSSSSALITVVREGASIIGLFVLMFYYSWQLSLILIVIAPIVSLVIRVVSKRFRSISKNMQNSMGQVTASAEQMLKGHKEVLIFGGQNVETERFNKVSNHMRQQGMKMVSASSISDPIIQLIASFALAFVLYAASFPDIMETLTAGKITVVFSSMIALMRPLKSLTNVNAQFQRGMAACQTLFSILDMEQEKDDGKLELKKANGDIEFRNVTFCYPTKELPALQNISMYIPAGKIVALVGRSGSGKSTIANLLTRFYDVNEGNIFLDGHDLREYKLSSLRGQVALVSQNVHLFNDTVANNIAYASENRYSREEIEKAAEMAYAMDFIRKLDNGLDTMIGENGVLLSGGQRQRIAIARALLRDSPVLILDEATSALDTESERAIQAALDELQKNRTSLVIAHRLSTIENADEILVVEDGHIVERGDHLSLLERNGVYSQLHRMQFGQ.

5 consecutive transmembrane segments (helical) span residues 15–35, 68–88, 152–172, 252–272, and 274–294; these read LWPI…ALIL, LIVI…SYCI, IIGL…ILIV, PIIQ…ASFP, and IMET…IALM. Positions 27 to 309 constitute an ABC transmembrane type-1 domain; the sequence is IVAAVALILN…LTNVNAQFQR (283 aa). The ABC transporter domain maps to 341–577; the sequence is IEFRNVTFCY…NGVYSQLHRM (237 aa). 375–382 contacts ATP; that stretch reads GRSGSGKS.

The protein belongs to the ABC transporter superfamily. Lipid exporter (TC 3.A.1.106) family. In terms of assembly, homodimer.

The protein resides in the cell inner membrane. The catalysed reaction is ATP + H2O + lipid A-core oligosaccharideSide 1 = ADP + phosphate + lipid A-core oligosaccharideSide 2.. In terms of biological role, involved in lipopolysaccharide (LPS) biosynthesis. Translocates lipid A-core from the inner to the outer leaflet of the inner membrane. Transmembrane domains (TMD) form a pore in the inner membrane and the ATP-binding domain (NBD) is responsible for energy generation. The protein is ATP-dependent lipid A-core flippase of Photorhabdus laumondii subsp. laumondii (strain DSM 15139 / CIP 105565 / TT01) (Photorhabdus luminescens subsp. laumondii).